We begin with the raw amino-acid sequence, 310 residues long: Pantoate--beta-alanine ligase (310 aa).

An ATP-binding site is contributed by 32–39 (MGYLHEGH). H39 functions as the Proton donor in the catalytic mechanism. Residue Q63 coordinates (R)-pantoate. Q63 serves as a coordination point for beta-alanine. An ATP-binding site is contributed by 175–178 (GKKD). Q181 contacts (R)-pantoate. 212-215 (MSSR) contributes to the ATP binding site.

This sequence belongs to the pantothenate synthetase family. In terms of assembly, homodimer. As to expression, expressed in roots, cotyledons, leaves, stems, cauline leaves, stigma, sepals and petals.

It localises to the cytoplasm. The protein localises to the cytosol. It carries out the reaction (R)-pantoate + beta-alanine + ATP = (R)-pantothenate + AMP + diphosphate + H(+). The protein operates within cofactor biosynthesis; (R)-pantothenate biosynthesis; (R)-pantothenate from (R)-pantoate and beta-alanine: step 1/1. Its activity is regulated as follows. Enzyme kinetics do not match Michaelis-Menten kinetics, suggesting allosteric behavior. Inhibited by high pantoate levels. In terms of biological role, catalyzes the condensation of pantoate with beta-alanine to form pantothenate. Essential for panthotenate biosynthesis. The protein is Pantoate--beta-alanine ligase of Arabidopsis thaliana (Mouse-ear cress).